A 564-amino-acid polypeptide reads, in one-letter code: MYAVATWLCFGSTSGWSFTLEDNNIFPKQYPIINFTTADATVESYTNFIRAVRSHLTTGADVRHEIPVLPNRVGLPISQRFILVELSNHAELSVTLALDVTNAYVVGCRAGNSAYFFHPDNQEDAEAITHLFTDVQNSFTFAFGGNYDRLEQLGGLRENIELGTGPLEDAISALYYYSTCGTQIPTLARSFMVCIQMISEAARFQYIEGEMRTRIRYNRRSAPDPSVITLENSWGRLSTAIQESNQGAFASPIQLQRRNGSKFNVYDVSILIPIIALMVYRCAPPPSSQFSLLIRPVVPNFNADVCMDPEPIVRIVGRNGLCVDVTGEEFFDGNPIQLWPCKSNTDWNQLWTLRKDSTIRSNGKCLTISKSSPRQQVVIYNCSTATVGATRWQIWDNRTIINPRSGLVLAATSGNSGTKLTVQTNIYAVSQGWLPTNNTQPFVTTIVGLYGMCLQANSGKVWLEDCTSEKAEQQWALYADGSIRPQQNRDNCLTTDANIKGTVVKILSCGPASSGQRWMFKNDGTILNLYNGLVLDVRRSDPSLKQIIVHPFHGNLNQIWLPLF.

Positions Met1–Asn24 are cleaved as a signal peptide. Ile32–Asn34 provides a ligand contact to beta-D-galactose. N-linked (GlcNAc...) asparagine glycosylation is present at Asn34. Catalysis depends on residues Tyr104, Tyr147, Glu200, and Arg203. AMP contacts are provided by residues Tyr104–Val105 and Gly145–Tyr147. Asn259 is a glycosylation site (N-linked (GlcNAc...) asparagine). Cysteines 282 and 306 form a disulfide. The propeptide at Ser291–Asn302 is linker peptide. Residues Pro309–Thr436 form the Ricin B-type lectin 1 domain. Beta-D-galactose-binding positions include Ile312, Asp324 to Glu328, Gln337, Lys342, and Asn348. A 1-alpha repeat occupies Asn319–Ser361. A disulfide bridge connects residues Cys322 and Cys341. The stretch at Asn362 to Asn402 is one 1-beta repeat. A disulfide bond links Cys365 and Cys382. 2 N-linked (GlcNAc...) asparagine glycosylation sites follow: Asn397 and Asn437. The 1-gamma repeat unit spans residues Ser405–Asn437. Asn437 serves as a coordination point for beta-D-galactose. The region spanning Thr439–Leu563 is the Ricin B-type lectin 2 domain. One copy of the 2-alpha repeat lies at Tyr450–Pro485. Intrachain disulfides connect Cys453–Cys466 and Cys492–Cys509. The stretch at Arg489–Asn528 is one 2-beta repeat. The 2-gamma repeat unit spans residues Asn531–Gln558.

It in the N-terminal section; belongs to the ribosome-inactivating protein family. Type 2 RIP subfamily.

The catalysed reaction is Endohydrolysis of the N-glycosidic bond at one specific adenosine on the 28S rRNA.. The sequence is that of Agglutinin from Ricinus communis (Castor bean).